We begin with the raw amino-acid sequence, 142 residues long: Ribosome-binding factor A (142 aa).

The disordered stretch occupies residues 118 to 142; the sequence is DEAKQQEHGTVENAKQDGDKAEDDK.

This sequence belongs to the RbfA family. Monomer. Binds 30S ribosomal subunits, but not 50S ribosomal subunits or 70S ribosomes.

The protein resides in the cytoplasm. In terms of biological role, one of several proteins that assist in the late maturation steps of the functional core of the 30S ribosomal subunit. Associates with free 30S ribosomal subunits (but not with 30S subunits that are part of 70S ribosomes or polysomes). Required for efficient processing of 16S rRNA. May interact with the 5'-terminal helix region of 16S rRNA. The chain is Ribosome-binding factor A from Shewanella piezotolerans (strain WP3 / JCM 13877).